Here is a 172-residue protein sequence, read N- to C-terminus: DNA-directed RNA polymerase II subunit rpb7 (172 aa).

The protein belongs to the eukaryotic RPB7/RPC8 RNA polymerase subunit family. In terms of assembly, component of the RNA polymerase II (Pol II) complex consisting of 12 subunits. RPB4 and RPB7 form a subcomplex that protrudes from the 10-subunit Pol II core complex.

It localises to the nucleus. Its function is as follows. DNA-dependent RNA polymerase catalyzes the transcription of DNA into RNA using the four ribonucleoside triphosphates as substrates. Component of RNA polymerase II which synthesizes mRNA precursors and many functional non-coding RNAs. Pol II is the central component of the basal RNA polymerase II transcription machinery. It is composed of mobile elements that move relative to each other. RPB7 is part of a subcomplex with RPB4 that binds to a pocket formed by RPB1, RPB2 and RPB6 at the base of the clamp element. The RPB4-RPB7 subcomplex seems to lock the clamp via RPB7 in the closed conformation thus preventing double-stranded DNA to enter the active site cleft. The RPB4-RPB7 subcomplex binds single-stranded DNA and RNA. This Dictyostelium discoideum (Social amoeba) protein is DNA-directed RNA polymerase II subunit rpb7 (polr2g).